Reading from the N-terminus, the 349-residue chain is Sensory histidine kinase/phosphatase NtrB (349 aa).

A PAS domain is found at 5–78 (TQPDAGQILN…SLEAGQGFTD (74 aa)). In terms of domain architecture, Histidine kinase spans 136–349 (GLAHEIKNPL…EFSVYLPIRK (214 aa)). His-139 carries the phosphohistidine; by autocatalysis modification. Lys-329 contributes to the ATP binding site.

Post-translationally, autophosphorylated.

It localises to the cytoplasm. It catalyses the reaction ATP + protein L-histidine = ADP + protein N-phospho-L-histidine.. In terms of biological role, member of the two-component regulatory system NtrB/NtrC, which controls expression of the nitrogen-regulated (ntr) genes in response to nitrogen limitation. Under conditions of nitrogen limitation, NtrB autophosphorylates and transfers the phosphoryl group to NtrC. In the presence of nitrogen, acts as a phosphatase that dephosphorylates and inactivates NtrC. This chain is Sensory histidine kinase/phosphatase NtrB (glnL), found in Escherichia coli O157:H7.